A 357-amino-acid chain; its full sequence is MSLKETVSNPYSKWLEATGPENDVIISSRVRLARNLMGYPFPHVLGHENADKVLYAVQSAVAQKSLQEAVGNLELSRMTELSSIERQILVEKHLISPDMLEQPEKRGVVLRDDEVISIMVNEEDHLRIQCLLPGLQLKECWDLANTVDDGLEQIIDYAFAKEQGYLTSCPTNIGTGLRASVMLHLPALVMTRQINAVLTTLSKLGLTVRGLYGEGTQATGNLFQVSNQVTLGLTEEEIIDNLITVALQLVTQERAARRALHKEQLHQIEDKVWRAYGLLKYARTMTSNETMTLLSDMRLGVDLGVITGIPPGIIMELIILSRPAFLSKVKGADLNPYQRDIFRATLIRERLNSLSNE.

The Phosphagen kinase C-terminal domain maps to 24–256 (VIISSRVRLA…LQLVTQERAA (233 aa)). Residues 27 to 31 (SSRVR), histidine 93, arginine 127, 178 to 182 (RASVM), and 209 to 214 (RGLYGE) each bind ATP. An RDXXRA motif of the pArg binding pocket involved in allosteric regulation motif is present at residues 339–344 (RDIFRA).

Belongs to the ATP:guanido phosphotransferase family.

It carries out the reaction L-arginyl-[protein] + ATP = N(omega)-phospho-L-arginyl-[protein] + ADP + H(+). With respect to regulation, appears to be allosterically activated by the binding of pArg-containing polypeptides to the pArg-binding pocket localized in the C-terminal domain of McsB. In terms of biological role, catalyzes the specific phosphorylation of arginine residues in proteins. This is Protein-arginine kinase from Desulforamulus reducens (strain ATCC BAA-1160 / DSM 100696 / MI-1) (Desulfotomaculum reducens).